A 132-amino-acid chain; its full sequence is MDRRPLTWALVLLGPALAIALGPAAAQEAPEKLCGHHFVRALVRLCGGPRWSSEEDGRPVAGGDRELLRWLEGQHLLHGLMASGDPVLVLAPQPLPQASRHHHHRRATAINPARHCCLSGCTRQDLLTLCPH.

Residues 1–21 (MDRRPLTWALVLLGPALAIAL) form the signal peptide. Gln-27 is modified (pyrrolidone carboxylic acid). Disulfide bonds link Cys-34–Cys-117, Cys-46–Cys-130, and Cys-116–Cys-121. Residues 67–104 (LLRWLEGQHLLHGLMASGDPVLVLAPQPLPQASRHHHH) constitute a propeptide, c peptide like.

It belongs to the insulin family. In terms of assembly, heterodimer of a B chain and an A chain linked by two disulfide bonds. 20% of B chains include an extra N-terminal pentapeptide. As to expression, expressed exclusively in Leydig cells of the testis.

It localises to the secreted. Its function is as follows. Seems to play a role in testicular function. May be a trophic hormone with a role in testicular descent in fetal life. Is a ligand for LGR8 receptor. The protein is Insulin-like 3 (INSL3) of Bos taurus (Bovine).